Here is a 2036-residue protein sequence, read N- to C-terminus: Ral GTPase-activating protein subunit alpha-1 (2036 aa).

Disordered regions lie at residues 343 to 384 and 476 to 497; these read LVSR…SSLC and EEGEKREEENGTNTADHVRNSS. The segment covering 345-365 has biased composition (basic and acidic residues); it reads SREESKNDNADKTDRTTEPEQ. 2 stretches are compositionally biased toward polar residues: residues 366 to 384 and 486 to 497; these read SHSNTSTLTEREPSSSSLC and GTNTADHVRNSS. Phosphoserine is present on residues Ser-711 and Ser-721. The disordered stretch occupies residues 715–753; it reads SFSRGWSRDQPGQAPMRQRSATTTGSPGTEKARSIVRQK. Thr-754 bears the Phosphothreonine mark. A Phosphoserine modification is found at Ser-773. Thr-778 is subject to Phosphothreonine. Phosphoserine occurs at positions 797, 860, 861, and 864. Disordered regions lie at residues 849–910 and 982–1009; these read SGNA…SDSH and TITGSESASPVHSPLGSRSQTPSPSTLN. Residues 850 to 863 show a composition bias toward polar residues; sequence GNASTMTRRGSSPG. Low complexity predominate over residues 895-910; it reads SPASAGSSDLISSDSH. Over residues 983–1009 the composition is skewed to polar residues; sequence ITGSESASPVHSPLGSRSQTPSPSTLN. A phosphoserine mark is found at Ser-986, Ser-990, Ser-994, and Ser-1000. Thr-1002 carries the post-translational modification Phosphothreonine. Residues Ser-1004 and Ser-1478 each carry the phosphoserine modification. The minimal domain that binds to TCF3/E12 stretch occupies residues 1327–2035; it reads FTNKTVAHVA…PYHHLPSDAD (709 aa). The stretch at 1716-1744 forms a coiled coil; sequence KQENDVINAILKQHTEEKEFVEKHFNDLN. Residues 1796–2004 enclose the Rap-GAP domain; sequence LRNLDSRQCR…EERARYLQTI (209 aa).

As to quaternary structure, component of the heterodimeric RalGAP1 complex with RALGAPB. Heterodimerization is required for activity. Interacts with the HLH region of TCF3/isoform E12. Widely expressed.

Its subcellular location is the cytoplasm. The protein localises to the nucleus. Functionally, catalytic subunit of the heterodimeric RalGAP1 complex which acts as a GTPase activator for the Ras-like small GTPases RALA and RALB. This is Ral GTPase-activating protein subunit alpha-1 (RALGAPA1) from Homo sapiens (Human).